The primary structure comprises 150 residues: MKLILTANVDNLGVPGDIVEVKAGYGRNYLLPRGYAIVATRGAEKQIEGIKRAQEARQIRDLDHAREVKEELENLSGVTISVRTAESGKMFGSVTADNIVDAVKKANGRSLDKHSIKLRKGDVKATGVYSVDVQLHEGIVASLSFEVVSA.

Belongs to the bacterial ribosomal protein bL9 family.

Binds to the 23S rRNA. The sequence is that of Large ribosomal subunit protein bL9 from Corynebacterium jeikeium (strain K411).